A 676-amino-acid chain; its full sequence is Probable LRR receptor-like serine/threonine-protein kinase At4g31250 (676 aa).

The first 26 residues, Met-1–Gly-26, serve as a signal peptide directing secretion. The Extracellular segment spans residues Asp-27–Pro-242. N-linked (GlcNAc...) asparagine glycans are attached at residues Asn-42, Asn-73, and Asn-83. LRR repeat units follow at residues Ile-98–Leu-122, Val-123–Gly-146, Lys-148–Leu-171, Pro-172–Asn-195, and Val-197–Asn-218. Asn-218 carries N-linked (GlcNAc...) asparagine glycosylation. A helical membrane pass occupies residues Phe-243–Phe-263. At Leu-264–Met-676 the chain is on the cytoplasmic side. Positions Thr-319 to Ala-330 are enriched in polar residues. Residues Thr-319–Arg-347 are disordered. The Protein kinase domain maps to Arg-366–Val-640. Ser-368 carries the post-translational modification Phosphoserine. Residues Leu-372 to Ser-380 and Lys-394 each bind ATP. Ser-446 and Ser-543 each carry phosphoserine. Residues Asp-641–Met-676 are disordered.

The protein belongs to the protein kinase superfamily. Ser/Thr protein kinase family.

The protein resides in the membrane. The enzyme catalyses L-seryl-[protein] + ATP = O-phospho-L-seryl-[protein] + ADP + H(+). It catalyses the reaction L-threonyl-[protein] + ATP = O-phospho-L-threonyl-[protein] + ADP + H(+). The polypeptide is Probable LRR receptor-like serine/threonine-protein kinase At4g31250 (Arabidopsis thaliana (Mouse-ear cress)).